Consider the following 194-residue polypeptide: MYLDQIKSELVEAQDVLNKFISDENNIKLIQEAALLISNSFKQGGKVLSCGNGGSHCDAMHFAEELTGRYRENRPGYPAIAISDASHLSCVSNDFGYEYVFSRYVEAVGQKGDVLFGLSTSGNSKNILNAIEAAKTKGMKVIAMTGKDGGKMAGLADVEIRVPHFRYADRIQEIHIKVIHILMMLIEFEMAKQA.

The SIS domain occupies 37–194 (ISNSFKQGGK…LIEFEMAKQA (158 aa)). Substrate is bound at residue 52-54 (NGG). Zn(2+) is bound by residues His-61 and Glu-65. Substrate-binding positions include Glu-65, 93 to 94 (ND), 119 to 121 (STS), Ser-124, and Gln-172. Zn(2+)-binding residues include Gln-172 and His-180.

The protein belongs to the SIS family. GmhA subfamily. In terms of assembly, homotetramer. Zn(2+) serves as cofactor.

It is found in the cytoplasm. The enzyme catalyses 2 D-sedoheptulose 7-phosphate = D-glycero-alpha-D-manno-heptose 7-phosphate + D-glycero-beta-D-manno-heptose 7-phosphate. It participates in carbohydrate biosynthesis; D-glycero-D-manno-heptose 7-phosphate biosynthesis; D-glycero-alpha-D-manno-heptose 7-phosphate and D-glycero-beta-D-manno-heptose 7-phosphate from sedoheptulose 7-phosphate: step 1/1. The protein operates within bacterial outer membrane biogenesis; LOS core biosynthesis. In terms of biological role, catalyzes the isomerization of sedoheptulose 7-phosphate in D-glycero-D-manno-heptose 7-phosphate. The protein is Phosphoheptose isomerase of Haemophilus influenzae (strain ATCC 51907 / DSM 11121 / KW20 / Rd).